Consider the following 170-residue polypeptide: MORN repeat-containing protein 5 (170 aa).

MORN repeat units follow at residues 8 to 30, 31 to 53, and 54 to 75; these read YFGE…TDTR, YIGE…SGSR, and FDAI…DGLQ.

As to expression, only detected in testis (at protein level).

Its subcellular location is the cell projection. It is found in the cilium. The protein localises to the flagellum. In Mus musculus (Mouse), this protein is MORN repeat-containing protein 5 (Morn5).